A 726-amino-acid polypeptide reads, in one-letter code: Netrin-A (726 aa).

Residues 1–29 form the signal peptide; sequence MIRGILLLLLGTTRFSPIQCISNDVYFKM. Residues 46–312 form the Laminin N-terminal domain; it reads EPRACIPDFV…AISDFSVGGR (267 aa). N-linked (GlcNAc...) asparagine glycosylation is found at asparagine 108, asparagine 112, and asparagine 127. 12 disulfides stabilise this stretch: cysteine 313–cysteine 322, cysteine 315–cysteine 332, cysteine 334–cysteine 343, cysteine 346–cysteine 366, cysteine 369–cysteine 378, cysteine 371–cysteine 396, cysteine 399–cysteine 408, cysteine 411–cysteine 429, cysteine 432–cysteine 444, cysteine 434–cysteine 451, cysteine 453–cysteine 462, and cysteine 465–cysteine 479. Laminin EGF-like domains are found at residues 313 to 368, 369 to 431, and 432 to 481; these read CKCN…ECKE, CNCN…VCKA, and CDCH…PCIK. Asparagine 445 carries N-linked (GlcNAc...) asparagine glycosylation. Residues 490-516 are disordered; the sequence is LDTQNTAPEPDEPESSPGSGGDRNGAA. 2 disulfides stabilise this stretch: cysteine 533–cysteine 671 and cysteine 549–cysteine 725. The NTR domain maps to 533–725; sequence CGKCRVSTKR…KRFQRRARTC (193 aa). Residues asparagine 652 and asparagine 679 are each glycosylated (N-linked (GlcNAc...) asparagine).

At the midline of developing CNS at the time of commissure formation and in different subsets of neurons, muscles, and epidermal patches.

It is found in the secreted. The protein localises to the extracellular space. Its subcellular location is the extracellular matrix. Functionally, netrins control guidance of CNS commissural axons at the midline and peripheral motor axons to their target muscles. The polypeptide is Netrin-A (NetA) (Drosophila melanogaster (Fruit fly)).